The chain runs to 160 residues: Phosphopantetheine adenylyltransferase (160 aa).

Ser10 serves as a coordination point for substrate. Residues 10–11 and His18 each bind ATP; that span reads SF. Lys42, Thr74, and Arg88 together coordinate substrate. Residues 89-91, Glu99, and 124-130 contribute to the ATP site; these read GLR and FYYISSR.

This sequence belongs to the bacterial CoaD family. As to quaternary structure, homohexamer. Requires Mg(2+) as cofactor.

Its subcellular location is the cytoplasm. The enzyme catalyses (R)-4'-phosphopantetheine + ATP + H(+) = 3'-dephospho-CoA + diphosphate. The protein operates within cofactor biosynthesis; coenzyme A biosynthesis; CoA from (R)-pantothenate: step 4/5. Functionally, reversibly transfers an adenylyl group from ATP to 4'-phosphopantetheine, yielding dephospho-CoA (dPCoA) and pyrophosphate. This is Phosphopantetheine adenylyltransferase from Bdellovibrio bacteriovorus (strain ATCC 15356 / DSM 50701 / NCIMB 9529 / HD100).